Consider the following 606-residue polypeptide: Aspartate--tRNA(Asp/Asn) ligase (606 aa).

Glu177 lines the L-aspartate pocket. Positions 201–204 (QIFK) are aspartate. Arg223 provides a ligand contact to L-aspartate. ATP contacts are provided by residues 223-225 (RDE) and Gln232. His461 contributes to the L-aspartate binding site. Position 499 (Glu499) interacts with ATP. Arg506 provides a ligand contact to L-aspartate. 551-554 (GLDR) serves as a coordination point for ATP.

This sequence belongs to the class-II aminoacyl-tRNA synthetase family. Type 1 subfamily. Homodimer.

The protein resides in the cytoplasm. The catalysed reaction is tRNA(Asx) + L-aspartate + ATP = L-aspartyl-tRNA(Asx) + AMP + diphosphate. In terms of biological role, aspartyl-tRNA synthetase with relaxed tRNA specificity since it is able to aspartylate not only its cognate tRNA(Asp) but also tRNA(Asn). Reaction proceeds in two steps: L-aspartate is first activated by ATP to form Asp-AMP and then transferred to the acceptor end of tRNA(Asp/Asn). This Prochlorococcus marinus (strain MIT 9211) protein is Aspartate--tRNA(Asp/Asn) ligase.